Here is a 270-residue protein sequence, read N- to C-terminus: MRNIALRIEYDGADFVGSQWQTNGRSVQGVLEAAWQQLTGERRRMTLAGRTDAGVHARGQVANVRTDTRHTISTIVRGLNGILPEDVGVLAAWEAPDDFHARYSAVRREYRYVIDNGRTPSPLLRRHAAYVPRRLDTAAMDAVVRQVIGTHDFAPLSDGPQEGSTVRICYEARCTRTEVWGQPLVLIDIAANAFLRHMVRNLVGTLIQVGEGRIDADRFAAVLAGDDRRARVLAPAHGLYLMAVRYPEDGTGAADEPAAPHGVTETRMQL.

D52 acts as the Nucleophile in catalysis. Y110 contributes to the substrate binding site. Residues 251 to 270 (TGAADEPAAPHGVTETRMQL) form a disordered region.

This sequence belongs to the tRNA pseudouridine synthase TruA family. As to quaternary structure, homodimer.

It catalyses the reaction uridine(38/39/40) in tRNA = pseudouridine(38/39/40) in tRNA. In terms of biological role, formation of pseudouridine at positions 38, 39 and 40 in the anticodon stem and loop of transfer RNAs. This is tRNA pseudouridine synthase A from Roseiflexus sp. (strain RS-1).